The sequence spans 463 residues: L-cystine uptake protein TcyP (463 aa).

A run of 10 helical transmembrane segments spans residues 3-23 (TLLV…LFVM), 34-54 (VFTA…IYGP), 73-93 (YVKL…LGAF), 105-125 (ISGL…AVGI), 184-204 (PTST…FLGV), 225-245 (IVMR…LAIM), 262-282 (MFVI…LLLL), 338-358 (LSIG…MMIA), 369-389 (VFII…AGVG), and 394-414 (FAAL…GLLI).

It belongs to the dicarboxylate/amino acid:cation symporter (DAACS) (TC 2.A.23) family.

Its subcellular location is the cell membrane. Functionally, mediates uptake of L-cystine, the oxidized form of L-cysteine. Although it is more specific for L-cystine, it could also transport a much broader range of amino acids and sulfur compounds including S-methylcysteine. This is L-cystine uptake protein TcyP (tcyP) from Bacillus subtilis (strain 168).